Here is a 136-residue protein sequence, read N- to C-terminus: Protein PsiE (136 aa).

4 helical membrane-spanning segments follow: residues 15 to 35 (ILQT…VVFL), 55 to 75 (YELV…ALIV), 82 to 102 (FHFP…RLII), and 108 to 128 (PLDV…LWLC).

This sequence belongs to the PsiE family.

The protein localises to the cell inner membrane. The polypeptide is Protein PsiE (Escherichia coli (strain SE11)).